The sequence spans 374 residues: Type IV secretion system protein PtlG homolog (374 aa).

The helical transmembrane segment at 38–56 (WMFALVAVALSCLLATGIW) threads the bilayer. The tract at residues 87–116 (PREPEPAPLPDMPAAPNPILPQPRPAPPVP) is disordered. The segment covering 92 to 116 (PAPLPDMPAAPNPILPQPRPAPPVP) has biased composition (pro residues).

It belongs to the TrbI/VirB10 family.

Its subcellular location is the cell membrane. This is Type IV secretion system protein PtlG homolog (ptlG) from Bordetella parapertussis (strain 12822 / ATCC BAA-587 / NCTC 13253).